The primary structure comprises 527 residues: MTSFFDSDSSSNVAEYSVSELSGSIKRTLEQAFEHVRVRGEISGYRGPHSSGHAYFALKDDRARMEAVIWKGTFARLKLRPEEGMEVIATGRVTTFPGSSKYQIVIDSLEPAGAGALMALLEERKRKLAAEGLFDAARKRPLPFMPKVIGVVTSPTGAVIRDILHRIADRFPVHVVVWPVRVQGDGASEEVAAAIRGFNALEEGGPIPRPDVLIVARGGGSLEDLWGFNDEAVVRAVAASGIPLISAVGHETDWTLIDYASDQRAPTPTGAAEMAVPVKADLEAQVANLSARLQAAATRQMDHRRHALRALARALPSLDQLLALPRRRFDEAAAGLGRGLQMNTANKRRSFERIAAHLRPELLTTRIREQRRHLLEAINKAERCVERQIDRRQARVSAADASLRTLPSRLAGQIHRSSDRVSGLGRRADAAMAAEMRRLKGALAAQDRVLQSLSYRNVLQRGFALVRDAAGDPVKQAAAVTAGMALSLEFADGRVSAVAGEEGAPPPAAPKKRASRPVVPTKQGSLF.

The segment at 499–527 (AGEEGAPPPAAPKKRASRPVVPTKQGSLF) is disordered.

The protein belongs to the XseA family. As to quaternary structure, heterooligomer composed of large and small subunits.

It is found in the cytoplasm. The catalysed reaction is Exonucleolytic cleavage in either 5'- to 3'- or 3'- to 5'-direction to yield nucleoside 5'-phosphates.. Its function is as follows. Bidirectionally degrades single-stranded DNA into large acid-insoluble oligonucleotides, which are then degraded further into small acid-soluble oligonucleotides. The sequence is that of Exodeoxyribonuclease 7 large subunit from Sinorhizobium fredii (strain NBRC 101917 / NGR234).